Consider the following 66-residue polypeptide: Large ribosomal subunit protein bL33c (66 aa).

This sequence belongs to the bacterial ribosomal protein bL33 family.

Its subcellular location is the plastid. It localises to the chloroplast. The protein is Large ribosomal subunit protein bL33c of Lepidium virginicum (Virginia pepperweed).